We begin with the raw amino-acid sequence, 216 residues long: Sugar fermentation stimulation protein homolog (216 aa).

It belongs to the SfsA family.

This Thermoplasma volcanium (strain ATCC 51530 / DSM 4299 / JCM 9571 / NBRC 15438 / GSS1) protein is Sugar fermentation stimulation protein homolog.